Consider the following 2345-residue polypeptide: Nonribisomal peptide synthetase malG (2345 aa).

An adenylation 1 region spans residues 226-620; sequence FSEQAKKNPT…VGRMGTVVKV (395 aa). One can recognise a Carrier 1 domain in the interval 766–839; that stretch reads TENETLLRLL…EAAGTMISAG (74 aa). Residue Ser-800 is modified to O-(pantetheine 4'-phosphoryl)serine. Residues 877–1292 are condensation 1; it reads EEIYPSTPLQ…LLCPSDKSKL (416 aa). The tract at residues 1317-1707 is adenylation 2; that stretch reads VRSERTAVSA…GRKNREVKLR (391 aa). Residues 1843 to 1926 form the Carrier 2 domain; it reads QPHESTALFV…DIARLIEGVK (84 aa). Ser-1885 bears the O-(pantetheine 4'-phosphoryl)serine mark. A reductase (R) domain region spans residues 1969-2256; that stretch reads GMSVFLTGGT…PRQLNALQSE (288 aa).

The protein belongs to the NRP synthetase family.

The enzyme catalyses L-proline + L-tryptophan + 2 ATP + NADPH = (S)-3-(indol-3-ylmethyl)-6,7,8,8a-tetrahydropyrrolo[1,2-a]pyrazin-1-one + 2 AMP + 2 diphosphate + NADP(+) + H2O + H(+). Functionally, nonribisomal peptide synthetase; part of the gene cluster that mediates the biosynthesis of malbrancheamide, a dichlorinated fungal indole alkaloid that belongs to a family of natural products containing a characteristic bicyclo[2.2.2]diazaoctane core. The first step of malbrancheamide biosynthesis involves coupling of L-proline and L-tryptophan by malG, a bimodular NRPS, to produce L-Pro-L-Trp aldehyde through reductive offloading. This compound undergoes spontaneous cyclization and dehydration to give a dienamine which is reverse prenylated at C-2 by malE. The other prenyltransferase present in the cluster, malB, displays modest activity, suggesting that may be a redundant gene in the pathway. Subsequently, a [4+2] Diels-Alder cyclo-addition catalyzed by the bifunctional enzyme malC forms the characteristic bicyclo[2.2.2]diazaoctane ring of premalbrancheamid. Finally, the flavin-dependent halogenase malA catalyzes the iterative dichlorination of the indole ring of premalbrancheamide to yield C-9 monochlorinated malbrancheamide B, C-8 monochlorinated isomalbrancheamide B, and dichlorinated malbrancheamide. MalA is also able to brominate premalbrancheamide at C-9 to yield malbrancheamide C, and, to a lesser extend, at C-8 to yield isomalbrancheamide C. Finally, malA can brominate C-9 monochlorinated malbrancheamide B at C-8 to yield malbrancheamide D, or C-8 monochlorinated isomalbrancheamide B at C-9 to produce isomalbrancheamide D. This is Nonribisomal peptide synthetase malG from Malbranchea aurantiaca.